A 370-amino-acid chain; its full sequence is Cyclic dehypoxanthine futalosine synthase (370 aa).

Positions 50–295 (TTFVIGRNVN…QSSWVTMGPE (246 aa)) constitute a Radical SAM core domain. Cys-64, Cys-68, and Cys-71 together coordinate [4Fe-4S] cluster.

This sequence belongs to the radical SAM superfamily. MqnC family. Requires [4Fe-4S] cluster as cofactor.

It carries out the reaction dehypoxanthine futalosine + S-adenosyl-L-methionine = cyclic dehypoxanthinylfutalosinate + 5'-deoxyadenosine + L-methionine + H(+). Its pathway is quinol/quinone metabolism; menaquinone biosynthesis. In terms of biological role, radical SAM enzyme that catalyzes the cyclization of dehypoxanthine futalosine (DHFL) into cyclic dehypoxanthine futalosine (CDHFL), a step in the biosynthesis of menaquinone (MK, vitamin K2). The polypeptide is Cyclic dehypoxanthine futalosine synthase (Halalkalibacterium halodurans (strain ATCC BAA-125 / DSM 18197 / FERM 7344 / JCM 9153 / C-125) (Bacillus halodurans)).